A 359-amino-acid polypeptide reads, in one-letter code: Probable mannitol dehydrogenase (359 aa).

Positions 50, 72, 103, 106, 109, 117, and 165 each coordinate Zn(2+).

It belongs to the zinc-containing alcohol dehydrogenase family. Zn(2+) serves as cofactor.

It catalyses the reaction D-mannitol + NAD(+) = D-mannose + NADH + H(+). Oxidizes mannitol to mannose. Provides the initial step by which translocated mannitol is committed to central metabolism and, by regulating mannitol pool size, is important in regulating salt tolerance at the cellular level. This is Probable mannitol dehydrogenase (CAD1) from Medicago sativa (Alfalfa).